We begin with the raw amino-acid sequence, 88 residues long: Small ribosomal subunit protein bS16c (88 aa).

This sequence belongs to the bacterial ribosomal protein bS16 family.

It localises to the plastid. The protein resides in the chloroplast. The polypeptide is Small ribosomal subunit protein bS16c (Citrus sinensis (Sweet orange)).